A 360-amino-acid polypeptide reads, in one-letter code: Ferredoxin--NADP reductase, leaf isozyme 1, chloroplastic (360 aa).

A chloroplast-targeting transit peptide spans 1-49; it reads MAAAISAAVSLPSSKSSSLLTKISSVSPQRIFLKKSTVCYRRVVSVKAQ. Residues 81 to 203 enclose the FAD-binding FR-type domain; that stretch reads KNPYTGRCLL…TGPVGKEMLM (123 aa). FAD is bound by residues 139 to 142, 160 to 162, tyrosine 166, and 177 to 179; these read RLYS, CVK, and VCS. Residues serine 142 and lysine 162 each contribute to the NADP(+) site. Cysteine 178 and cysteine 183 are oxidised to a cystine. The residue at position 179 (serine 179) is a Phosphoserine. Residue threonine 210 is modified to Phosphothreonine. Residue threonine 218 participates in FAD binding. NADP(+) contacts are provided by residues threonine 218, 250-251, 280-281, lysine 290, 319-320, and glutamate 358; these read VP, SR, and GL.

The protein belongs to the ferredoxin--NADP reductase type 1 family. Heterodimer with LFNR2. Interacts with PGRL1A and PGRL1B. Interacts with TIC62. Component of high molecular weight thylakoid LFNRs-containing protein complexes containing LIR1, LFNR1, LFNR2, TIC62 and TROL proteins. Interacts directly with LIR1 and TIC62; LIR1 increases the affinity of LFNR1 and LFNR2 for TIC62. Binds to YCF54 in chloroplasts. FAD is required as a cofactor. May form interchain disulfide bonds with LIR1. As to expression, expressed in shoots. Restricted to green tissues, being more abundant in siliques.

It localises to the plastid. It is found in the chloroplast stroma. The protein resides in the chloroplast thylakoid membrane. The catalysed reaction is 2 reduced [2Fe-2S]-[ferredoxin] + NADP(+) + H(+) = 2 oxidized [2Fe-2S]-[ferredoxin] + NADPH. It functions in the pathway energy metabolism; photosynthesis. In terms of biological role, plays a key role in regulating the relative amounts of cyclic and non-cyclic electron flow to meet the demands of the plant for ATP and reducing power. Probable electron donor required for the MgProto monomethylester (MgProtoME) cyclase complex reaction to form protochlorophyllide, thus connecting chlorophyll synthesis with photosynthetic activity. This Arabidopsis thaliana (Mouse-ear cress) protein is Ferredoxin--NADP reductase, leaf isozyme 1, chloroplastic.